The following is a 98-amino-acid chain: Large ribosomal subunit protein uL23 (98 aa).

The protein belongs to the universal ribosomal protein uL23 family. Part of the 50S ribosomal subunit. Contacts protein L29, and trigger factor when it is bound to the ribosome.

Functionally, one of the early assembly proteins it binds 23S rRNA. One of the proteins that surrounds the polypeptide exit tunnel on the outside of the ribosome. Forms the main docking site for trigger factor binding to the ribosome. In Lactobacillus johnsonii (strain CNCM I-12250 / La1 / NCC 533), this protein is Large ribosomal subunit protein uL23.